The chain runs to 307 residues: Putative oxidoreductase YceM (307 aa).

Belongs to the Gfo/Idh/MocA family.

The polypeptide is Putative oxidoreductase YceM (yceM) (Escherichia coli (strain K12)).